Reading from the N-terminus, the 298-residue chain is GTP cyclohydrolase FolE2 (298 aa).

The protein belongs to the GTP cyclohydrolase IV family.

The enzyme catalyses GTP + H2O = 7,8-dihydroneopterin 3'-triphosphate + formate + H(+). The protein operates within cofactor biosynthesis; 7,8-dihydroneopterin triphosphate biosynthesis; 7,8-dihydroneopterin triphosphate from GTP: step 1/1. Its function is as follows. Converts GTP to 7,8-dihydroneopterin triphosphate. The chain is GTP cyclohydrolase FolE2 from Azotobacter vinelandii (strain DJ / ATCC BAA-1303).